We begin with the raw amino-acid sequence, 447 residues long: Neuraminidase (447 aa).

The Intravirion segment spans residues 1–6 (MNPNQK). The helical transmembrane segment at 7 to 27 (IITIGSICMGIGIISLILQIG) threads the bilayer. Residues 11–33 (GSICMGIGIISLILQIGNIISMW) are involved in apical transport and lipid raft association. The Virion surface portion of the chain corresponds to 28–447 (NIISMWVSHS…GAELPFTIDK (420 aa)). A hypervariable stalk region region spans residues 36-68 (HSIQTENQNHHEACNPSIAGQDAASVALAGNSS). Asn-66 carries N-linked (GlcNAc...) asparagine; by host glycosylation. The interval 69-447 (LCPISGWAIY…GAELPFTIDK (379 aa)) is head of neuraminidase. 8 disulfides stabilise this stretch: Cys-70/Cys-395, Cys-102/Cys-107, Cys-162/Cys-209, Cys-211/Cys-216, Cys-257/Cys-270, Cys-259/Cys-268, Cys-296/Cys-313, and Cys-399/Cys-424. Residue Arg-96 participates in substrate binding. Asn-124 is a glycosylation site (N-linked (GlcNAc...) asparagine; by host). The Proton donor/acceptor role is filled by Asp-129. Arg-130 serves as a coordination point for substrate. A glycan (N-linked (GlcNAc...) asparagine; by host) is linked at Asn-213. Position 255–256 (255–256 (EE)) interacts with substrate. Arg-271 contributes to the substrate binding site. The Ca(2+) site is built by Asp-272, Gly-276, and Asp-302. Arg-346 is a binding site for substrate. The active-site Nucleophile is the Tyr-380.

The protein belongs to the glycosyl hydrolase 34 family. As to quaternary structure, homotetramer. The cofactor is Ca(2+). In terms of processing, N-glycosylated.

It is found in the virion membrane. The protein resides in the host apical cell membrane. The catalysed reaction is Hydrolysis of alpha-(2-&gt;3)-, alpha-(2-&gt;6)-, alpha-(2-&gt;8)- glycosidic linkages of terminal sialic acid residues in oligosaccharides, glycoproteins, glycolipids, colominic acid and synthetic substrates.. Its activity is regulated as follows. Inhibited by the neuraminidase inhibitors zanamivir (Relenza) and oseltamivir (Tamiflu). These drugs interfere with the release of progeny virus from infected cells and are effective against all influenza strains. Resistance to neuraminidase inhibitors is quite rare. Catalyzes the removal of terminal sialic acid residues from viral and cellular glycoconjugates. Cleaves off the terminal sialic acids on the glycosylated HA during virus budding to facilitate virus release. Additionally helps virus spread through the circulation by further removing sialic acids from the cell surface. These cleavages prevent self-aggregation and ensure the efficient spread of the progeny virus from cell to cell. Otherwise, infection would be limited to one round of replication. Described as a receptor-destroying enzyme because it cleaves a terminal sialic acid from the cellular receptors. May facilitate viral invasion of the upper airways by cleaving the sialic acid moieties on the mucin of the airway epithelial cells. Likely to plays a role in the budding process through its association with lipid rafts during intracellular transport. May additionally display a raft-association independent effect on budding. Plays a role in the determination of host range restriction on replication and virulence. Sialidase activity in late endosome/lysosome traffic seems to enhance virus replication. The polypeptide is Neuraminidase (Aves).